The primary structure comprises 117 residues: Large ribosomal subunit protein uL22 (117 aa).

It belongs to the universal ribosomal protein uL22 family. As to quaternary structure, part of the 50S ribosomal subunit.

In terms of biological role, this protein binds specifically to 23S rRNA; its binding is stimulated by other ribosomal proteins, e.g. L4, L17, and L20. It is important during the early stages of 50S assembly. It makes multiple contacts with different domains of the 23S rRNA in the assembled 50S subunit and ribosome. Its function is as follows. The globular domain of the protein is located near the polypeptide exit tunnel on the outside of the subunit, while an extended beta-hairpin is found that lines the wall of the exit tunnel in the center of the 70S ribosome. This chain is Large ribosomal subunit protein uL22, found in Synechococcus elongatus (strain ATCC 33912 / PCC 7942 / FACHB-805) (Anacystis nidulans R2).